The following is a 494-amino-acid chain: Glycerol kinase (494 aa).

Threonine 13 contacts ADP. ATP contacts are provided by threonine 13, threonine 14, and serine 15. Threonine 13 serves as a coordination point for sn-glycerol 3-phosphate. Arginine 17 contributes to the ADP binding site. Sn-glycerol 3-phosphate is bound by residues arginine 83, glutamate 84, tyrosine 135, and aspartate 244. Glycerol contacts are provided by arginine 83, glutamate 84, tyrosine 135, aspartate 244, and glutamine 245. Residues threonine 266 and glycine 309 each contribute to the ADP site. ATP is bound by residues threonine 266, glycine 309, glutamine 313, and glycine 410. Positions 410 and 414 each coordinate ADP.

Belongs to the FGGY kinase family.

It carries out the reaction glycerol + ATP = sn-glycerol 3-phosphate + ADP + H(+). It functions in the pathway polyol metabolism; glycerol degradation via glycerol kinase pathway; sn-glycerol 3-phosphate from glycerol: step 1/1. Inhibited by fructose 1,6-bisphosphate (FBP). Functionally, key enzyme in the regulation of glycerol uptake and metabolism. Catalyzes the phosphorylation of glycerol to yield sn-glycerol 3-phosphate. The protein is Glycerol kinase of Shewanella baltica (strain OS195).